The sequence spans 932 residues: Chaperone protein ClpC3, chloroplastic (932 aa).

The interval 1–20 (MERTLLNPPPSLRSPACRTT) is disordered. The N-terminal 48 residues, 1–48 (MERTLLNPPPSLRSPACRTTTATRIRPSSSMATMIPTPPPMRHARLVK), are a transit peptide targeting the chloroplast. One can recognise a Clp R domain in the interval 99–240 (FDMFTDKAIK…RSEVIRMISD (142 aa)). Repeat stretches follow at residues 102-167 (FTDK…AGRG) and 177-240 (FTPA…MISD). Residues 264 to 511 (LLEYGTNLTK…LVRLRNAQLP (248 aa)) form an i region. ATP is bound at residue 309–316 (GEPGVGKT). In terms of domain architecture, UVR spans 518–553 (EKKLKKIMAEKSEAIRSQDFEKAGALRGEEVELKSE). Residues 579 to 770 (VTEADVQHIV…LIIMTSNVGS (192 aa)) are II. Residue 653 to 660 (GPTGVGKS) participates in ATP binding.

It belongs to the ClpA/ClpB family. ClpC subfamily.

Its subcellular location is the plastid. The protein localises to the chloroplast. Molecular chaperone that may interact with a ClpP-like protease involved in degradation of denatured proteins in the chloroplast. The sequence is that of Chaperone protein ClpC3, chloroplastic (CLPC3) from Oryza sativa subsp. japonica (Rice).